Reading from the N-terminus, the 416-residue chain is 3-isopropylmalate dehydratase large subunit 2 (416 aa).

[4Fe-4S] cluster-binding residues include Cys-296, Cys-356, and Cys-359.

Belongs to the aconitase/IPM isomerase family. LeuC type 2 subfamily. As to quaternary structure, heterodimer of LeuC and LeuD. [4Fe-4S] cluster is required as a cofactor.

The enzyme catalyses (2R,3S)-3-isopropylmalate = (2S)-2-isopropylmalate. It participates in amino-acid biosynthesis; L-leucine biosynthesis; L-leucine from 3-methyl-2-oxobutanoate: step 2/4. Catalyzes the isomerization between 2-isopropylmalate and 3-isopropylmalate, via the formation of 2-isopropylmaleate. This is 3-isopropylmalate dehydratase large subunit 2 from Archaeoglobus fulgidus (strain ATCC 49558 / DSM 4304 / JCM 9628 / NBRC 100126 / VC-16).